Consider the following 88-residue polypeptide: UPF0223 protein YktA (88 aa).

Belongs to the UPF0223 family.

The chain is UPF0223 protein YktA (yktA) from Bacillus subtilis (strain 168).